Reading from the N-terminus, the 432-residue chain is Serine/threonine-protein kinase Sgk1 (432 aa).

The disordered stretch occupies residues Pro67 to His93. The span at Gln82–Pro92 shows a compositional bias: polar residues. Residues Phe99 to Phe356 form the Protein kinase domain. ATP-binding positions include Ile105–Val113 and Lys128. Asp223 (proton acceptor) is an active-site residue. The AGC-kinase C-terminal domain maps to Ser357–Leu432.

It belongs to the protein kinase superfamily. AGC Ser/Thr protein kinase family.

It localises to the cytoplasm. Its subcellular location is the nucleus. The protein localises to the endoplasmic reticulum. It carries out the reaction L-seryl-[protein] + ATP = O-phospho-L-seryl-[protein] + ADP + H(+). The catalysed reaction is L-threonyl-[protein] + ATP = O-phospho-L-threonyl-[protein] + ADP + H(+). In terms of biological role, protein kinase that may play an important role in cellular stress response. May be involved in the regulation of processes such as cell survival, neuronal excitability and renal sodium excretion. The chain is Serine/threonine-protein kinase Sgk1 (SGK1) from Gallus gallus (Chicken).